A 356-amino-acid polypeptide reads, in one-letter code: Terpene synthase 10 (356 aa).

The DDxx(x)D/E motif motif lies at 90–95; it reads DDYLDS. An NDxxSxxxD/E motif motif is present at residues 232 to 240; that stretch reads NDAVSYAKE.

This sequence belongs to the terpene synthase family.

The enzyme catalyses geranylgeranyl diphosphate = beta-araneosene + diphosphate. Functionally, terpene synthase that converts its substrate farnesyl diphosphate (FPP) into several unidentified sesquiterpenes. TPS10 also converts geranylgeranyl diphosphate (GGPP) into the diterpene beta-araneosene. This chain is Terpene synthase 10, found in Dictyostelium purpureum (Slime mold).